A 767-amino-acid polypeptide reads, in one-letter code: Syn-copalyl diphosphate synthase (767 aa).

The disordered stretch occupies residues 45-74 (GPMLISKSPPYPASEETREWEAEGQHEHTD). Over residues 59 to 74 (EETREWEAEGQHEHTD) the composition is skewed to basic and acidic residues. Lys-233 contributes to the substrate binding site. Positions 365 and 367 each coordinate Mg(2+). A DXDD motif motif is present at residues 365-368 (DIDD). Substrate is bound at residue Lys-453.

It depends on Mg(2+) as a cofactor.

It catalyses the reaction (2E,6E,10E)-geranylgeranyl diphosphate = 9alpha-copalyl diphosphate. Catalyzes the conversion of geranylgeranyl diphosphate to the phytoalexin precursor syn-copalyl diphosphate. The chain is Syn-copalyl diphosphate synthase (CPS4) from Oryza sativa subsp. indica (Rice).